The chain runs to 179 residues: Gamma-glutamyl cyclotransferase verK (179 aa).

It belongs to the class-I pyridoxal-phosphate-dependent aminotransferase family.

The enzyme catalyses an alpha-(gamma-L-glutamyl)-L-amino acid = 5-oxo-L-proline + an L-alpha-amino acid. It functions in the pathway mycotoxin biosynthesis. In terms of biological role, gamma-glutamyl cyclotransferase; part of the gene cluster that mediates the biosynthesis of 11'-deoxyverticillin A, one of the dimeric epipolythiodioxopiperazines (ETPs) from the verticillin family that act as mycotoxins. 11'-deoxyverticillin A is required for normal conidiation. The nonribosomal peptide synthetase verP is speculated to be responsible for condensation of amino acids to form the carbon skeleton of verticillin, whereas the cluster-specific tailoring enzymes are involved in further modifications leading to the production of 11'-deoxyverticillin A. The sequence is that of Gamma-glutamyl cyclotransferase verK from Clonostachys rogersoniana.